The sequence spans 340 residues: Ribosomal RNA small subunit methyltransferase C (340 aa).

The protein belongs to the methyltransferase superfamily. RsmC family. In terms of assembly, monomer.

Its subcellular location is the cytoplasm. It catalyses the reaction guanosine(1207) in 16S rRNA + S-adenosyl-L-methionine = N(2)-methylguanosine(1207) in 16S rRNA + S-adenosyl-L-homocysteine + H(+). In terms of biological role, specifically methylates the guanine in position 1207 of 16S rRNA in the 30S particle. This Vibrio cholerae serotype O1 (strain ATCC 39541 / Classical Ogawa 395 / O395) protein is Ribosomal RNA small subunit methyltransferase C.